Reading from the N-terminus, the 422-residue chain is Serine hydroxymethyltransferase (422 aa).

A (6S)-5,6,7,8-tetrahydrofolate-binding site is contributed by 121 to 123; that stretch reads GHI. Lysine 227 is subject to N6-(pyridoxal phosphate)lysine. Residue glutamate 245 coordinates (6S)-5,6,7,8-tetrahydrofolate.

This sequence belongs to the SHMT family. As to quaternary structure, homodimer. It depends on pyridoxal 5'-phosphate as a cofactor.

The protein resides in the cytoplasm. The catalysed reaction is 5,10-methylenetetrahydromethanopterin + glycine + H2O = 5,6,7,8-tetrahydromethanopterin + L-serine. It participates in amino-acid biosynthesis; glycine biosynthesis; glycine from L-serine: step 1/1. In terms of biological role, catalyzes the reversible interconversion of serine and glycine with tetrahydromethanopterin (H4MPT) serving as the one-carbon carrier. Also exhibits a pteridine-independent aldolase activity toward beta-hydroxyamino acids, producing glycine and aldehydes, via a retro-aldol mechanism. The polypeptide is Serine hydroxymethyltransferase (Methanobrevibacter smithii (strain ATCC 35061 / DSM 861 / OCM 144 / PS)).